The sequence spans 395 residues: MQKMVILGATGSIGASTLSVIEQNPEAYKAFALVAHKSVDKMLDLCIKYNPSIAHMVDPQAAAELQRRLPAHMAIAVSSGEDELAAIVALPEVDCVMAAIVGAAGLPATLAAVKAGKRVLLANKESLVMSGRLFIDAMQGSNAKVLPVDSEHNAIFQCLPEPAQQAIGACDLAGAGISHILLTGSGGPFLTSDLDSLSQMTPDQACKHPNWSMGRKISVDSASMMNKGLEYIEARWLFNATKEQLKVVVHPQSVIHSMVQYKDGSVLAQMGNPDMRTPIAHCMAYPQRISAGVEPLDFFKVGQLSFLEPDFNRFPCLKLAIDACEQGQEATTVLNAANEVSVEAFLAGLIRFTDIARVNEYCLSHVEQRSLDTIEDILALDGLARRAAQERVAKL.

The NADPH site is built by T10, G11, S12, I13, K37, and N123. K124 provides a ligand contact to 1-deoxy-D-xylulose 5-phosphate. Residue E125 participates in NADPH binding. Position 149 (D149) interacts with Mn(2+). 4 residues coordinate 1-deoxy-D-xylulose 5-phosphate: S150, E151, S185, and H208. Residue E151 participates in Mn(2+) binding. NADPH is bound at residue G214. Residues S221, N226, K227, and E230 each coordinate 1-deoxy-D-xylulose 5-phosphate. Mn(2+) is bound at residue E230.

This sequence belongs to the DXR family. It depends on Mg(2+) as a cofactor. Requires Mn(2+) as cofactor.

The catalysed reaction is 2-C-methyl-D-erythritol 4-phosphate + NADP(+) = 1-deoxy-D-xylulose 5-phosphate + NADPH + H(+). Its pathway is isoprenoid biosynthesis; isopentenyl diphosphate biosynthesis via DXP pathway; isopentenyl diphosphate from 1-deoxy-D-xylulose 5-phosphate: step 1/6. In terms of biological role, catalyzes the NADPH-dependent rearrangement and reduction of 1-deoxy-D-xylulose-5-phosphate (DXP) to 2-C-methyl-D-erythritol 4-phosphate (MEP). The chain is 1-deoxy-D-xylulose 5-phosphate reductoisomerase from Shewanella loihica (strain ATCC BAA-1088 / PV-4).